We begin with the raw amino-acid sequence, 874 residues long: Adhesion G-protein coupled receptor D1 (874 aa).

A signal peptide spans 1-25 (MEKLLRLCCWYSWLLLFYYNFQVRG). The Extracellular segment spans residues 26–567 (VYSRSQDHPG…LARGHQVALS (542 aa)). The Pentraxin (PTX) domain occupies 79 to 276 (KGVTLLYYGR…ASPVMPTDAY (198 aa)). N-linked (GlcNAc...) asparagine glycosylation is found at Asn-90, Asn-185, Asn-282, Asn-302, Asn-319, Asn-394, Asn-476, Asn-501, and Asn-533. Residues 371–557 (QVTVEGSSAM…AILMQVVPLE (187 aa)) enclose the GAIN-B domain. 2 cysteine pairs are disulfide-bonded: Cys-510/Cys-539 and Cys-527/Cys-541. A GPS region spans residues 510–557 (CAFLDFSSGEGVWSNHGCALTRGNLTYSVCRCTHLTNFAILMQVVPLE). Residues 546-554 (NFAILMQVV) are stachel. Gln-563 contacts 17beta-hydroxy-5alpha-androstan-3-one. The chain crosses the membrane as a helical span at residues 568 to 590 (SISYVGCSLSVLCLVATLVTFAV). At 591–601 (LSSVSTIRNQR) the chain is on the cytoplasmic side. A helical transmembrane segment spans residues 602 to 623 (YHIHANLSFAVLVAQVLLLISF). The Extracellular segment spans residues 624-632 (RLEPGTTPC). A disulfide bridge connects residues Cys-632 and Cys-704. Residues 633 to 655 (QVMAVLLHYFFLSAFAWMLVEGL) traverse the membrane as a helical segment. The Cytoplasmic segment spans residues 656–673 (HLYSMVIKVFGSEDSKHR). Residues 674-695 (YYYGMGWGFPLLICIISLSFAM) form a helical membrane-spanning segment. Topologically, residues 696–710 (DSYGTSNNCWLSLAS) are extracellular. Residues 711-732 (GAIWAFVAPALFVIVVNIGILI) form a helical membrane-spanning segment. Residues 733 to 757 (AVTRVISQISADNYKIHGDPSAFKL) are Cytoplasmic-facing. A helical membrane pass occupies residues 758–780 (TAKAVAVLLPILGTSWVFGVLAV). The Extracellular segment spans residues 781–783 (NGC). A helical transmembrane segment spans residues 784–810 (AVVFQYMFATLNSLQGLFIFLFHCLLN). Position 795 (Asn-795) interacts with 17beta-hydroxy-5alpha-androstan-3-one. Residues 811 to 874 (SEVRAAFKHK…SAHRVDLSAV (64 aa)) are Cytoplasmic-facing. The interval 854 to 874 (TKLSPWDKSSHSAHRVDLSAV) is disordered. The segment covering 861–874 (KSSHSAHRVDLSAV) has biased composition (basic and acidic residues).

It belongs to the G-protein coupled receptor 2 family. Adhesion G-protein coupled receptor (ADGR) subfamily. In terms of assembly, heterodimer of 2 chains generated by proteolytic processing; the large extracellular N-terminal fragment and the membrane-bound C-terminal fragment predominantly remain associated and non-covalently linked. Interacts with ESYT1; interaction takes place in absence of cytosolic calcium and inhibits the G protein-coupled receptor activity of ADGRD1. Autoproteolytically processed at the GPS region of the GAIN-B domain; this cleavage modulates receptor activity. Cleavage takes place early in the secretory pathway before N-glycosylation. As to expression, up-regulated in CD133(+) cell population of glioblastoma.

The protein resides in the cell membrane. Forms a heterodimer of 2 chains generated by proteolytic processing that remain associated through non-covalent interactions mediated by the GAIN-B domain. In the inactivated receptor, the Stachel sequence (also named stalk) is embedded in the GAIN-B domain, where it adopts a beta-strand conformation. On activation, the Stachel moves into the 7 transmembrane region and adopts a twisted hook-shaped configuration that forms contacts within the receptor, leading to coupling of a G-alpha protein, which activates signaling. The cleaved GAIN-B and N-terminal domains can then dissociate from the rest of the receptor. Interaction with ESYT1 in absence of cytosolic calcium inhibits the G protein-coupled receptor activity; interaction and inhibition is relieved when cytosolic calcium increases. Activated by AP503, a small molecule that activates ADGRD1 without activating androgen nuclear receptors: AP503 enhances muscle strength without eliciting androgenic adverse effects. Activated by the 8E3E8 antibody that targets the N-terminus. In terms of biological role, adhesion G-protein coupled receptor (aGPCR) for androgen hormone 5alpha-dihydrotestosterone (5alpha-DHT), also named 17beta-hydroxy-5alpha-androstan-3-one, the most potent hormone among androgens. Also activated by methenolone drug. Ligand binding causes a conformation change that triggers signaling via guanine nucleotide-binding proteins (G proteins) and modulates the activity of downstream effectors, such as adenylate cyclase. ADGRD1 is coupled to G(s) G proteins and mediates activation of adenylate cyclase activity. Acts as a 5alpha-DHT receptor in muscle cells, thereby increasing intracellular cyclic AMP (cAMP) levels and enhancing muscle strength. The chain is Adhesion G-protein coupled receptor D1 from Homo sapiens (Human).